The sequence spans 187 residues: Calcium and integrin-binding family member 2 (187 aa).

EF-hand domains follow at residues 66-101, 103-138, and 144-179; these read RENP…LCES, PREL…LTKS, and EVVL…APDF. D116, N118, D120, D127, D157, D159, D161, K163, and D168 together coordinate Ca(2+).

Monomer. Homodimer. Interacts with WHRN and MYO7A. Interacts with ITGA2B (via C-terminus cytoplasmic tail region); the interactions are stabilized/increased in a calcium and magnesium-dependent manner. Interacts with ITGA7 (via C-terminus cytoplasmic tail region); the interactions are stabilized/increased in a calcium and magnesium-dependent manner. Interacts with TMC1. Interacts with TMC2.

The protein localises to the cytoplasm. The protein resides in the cell projection. It is found in the stereocilium. Its subcellular location is the photoreceptor inner segment. It localises to the cilium. The protein localises to the photoreceptor outer segment. The protein resides in the cell membrane. It is found in the sarcolemma. Functionally, calcium- and integrin-binding protein that plays a role in intracellular calcium homeostasis. Acts as an auxiliary subunit of the sensory mechanoelectrical transduction (MET) channel in hair cells. Essential for mechanoelectrical transduction (MET) currents in auditory hair cells and thereby required for hearing. Regulates the function of hair cell mechanotransduction by controlling the distribution of transmembrane channel-like proteins TMC1 and TMC2, and by regulating the function of the MET channels in hair cells. Required for the maintenance of auditory hair cell stereocilia bundle morphology and function and for hair-cell survival in the cochlea. Critical for proper photoreceptor cell maintenance and function. Plays a role in intracellular calcium homeostasis by decreasing ATP-induced calcium release. The chain is Calcium and integrin-binding family member 2 (Cib2) from Rattus norvegicus (Rat).